A 746-amino-acid polypeptide reads, in one-letter code: Protein psiN (746 aa).

Positions 1–23 (MGNINKKLFYFLIQLITILIVLS) are cleaved as a signal peptide. Residues 24–679 (DDSYNSLLPL…KCQSAAVKAA (656 aa)) lie on the Extracellular side of the membrane. N-linked (GlcNAc...) asparagine glycosylation is found at Asn-97 and Asn-124. The 152-residue stretch at 125–276 (VTSDDPRIYS…YDYCGVCEGM (152 aa)) folds into the PA14 domain. N-linked (GlcNAc...) asparagine glycosylation is found at Asn-319, Asn-353, Asn-380, Asn-477, Asn-553, Asn-628, and Asn-654. Residues 680 to 700 (VGVGAGAAAGIAIGGAIALGL) form a helical membrane-spanning segment. Over 701–746 (AAFGGKRGYDAWKSSRDNQIQTSSENPLYNPNPNQGDNPLYAANNS) the chain is Cytoplasmic. Residues 714–746 (SSRDNQIQTSSENPLYNPNPNQGDNPLYAANNS) are disordered. Over residues 717–746 (DNQIQTSSENPLYNPNPNQGDNPLYAANNS) the composition is skewed to polar residues.

Belongs to the prespore-cell-inducing factor family.

It localises to the membrane. This Dictyostelium discoideum (Social amoeba) protein is Protein psiN (psiN).